A 105-amino-acid polypeptide reads, in one-letter code: Large ribosomal subunit protein uL24 (105 aa).

The protein belongs to the universal ribosomal protein uL24 family. As to quaternary structure, part of the 50S ribosomal subunit.

Functionally, one of two assembly initiator proteins, it binds directly to the 5'-end of the 23S rRNA, where it nucleates assembly of the 50S subunit. Its function is as follows. One of the proteins that surrounds the polypeptide exit tunnel on the outside of the subunit. This chain is Large ribosomal subunit protein uL24, found in Clostridium botulinum (strain ATCC 19397 / Type A).